Consider the following 453-residue polypeptide: Putative folate transporter 2 (453 aa).

11 helical membrane passes run 41–64, 76–96, 108–126, 132–156, 176–195, 201–220, 241–260, 280–300, 312–330, 346–366, and 416–437; these read IVVYLVGLSDGLIHLASLAIYYLF, SLILMYPYLPFILKPIIALIT, PYLFLFSLFQSLNFLSLAL, IQATLVLFFISLCASFCTTVAEALV, IASKAVGSLSVAYFSGYFLE, YIFMATSIFPLIISISCLFL, FINTPVFIGPFLYIFVYMSG, SFMGTLRLTYGIASLIGIIVY, TLIFTTLVSFPIYISPIIL, VLSGGFLIEAITEIQLLPLFI, and LSMYILTCGLFLLLSLSLVPLL.

Belongs to the major facilitator superfamily. Folate-biopterin transporter (TC 2.A.71) family.

The protein resides in the plastid. It is found in the apicoplast. Its subcellular location is the membrane. Functionally, putative folate transporter. Required for sporogony of malaria parasites and host switching. The chain is Putative folate transporter 2 from Plasmodium berghei (strain Anka).